A 151-amino-acid chain; its full sequence is Small ribosomal subunit protein uS15 (151 aa).

Belongs to the universal ribosomal protein uS15 family.

The sequence is that of Small ribosomal subunit protein uS15 (RPS13) from Lumbricus rubellus (Humus earthworm).